Reading from the N-terminus, the 376-residue chain is Chaperone protein DnaJ (376 aa).

The region spanning 5 to 70 (DYYEILGVSK…QKRAAYDQYG (66 aa)) is the J domain. The segment at 131–209 (GVTKEIRIPT…CHGHGRVERS (79 aa)) adopts a CR-type zinc-finger fold. Cys-144, Cys-147, Cys-161, Cys-164, Cys-183, Cys-186, Cys-197, and Cys-200 together coordinate Zn(2+). CXXCXGXG motif repeat units lie at residues 144 to 151 (CDVCHGSG), 161 to 168 (CPTCHGSG), 183 to 190 (CPHCQGRG), and 197 to 204 (CNKCHGHG).

This sequence belongs to the DnaJ family. As to quaternary structure, homodimer. The cofactor is Zn(2+).

The protein resides in the cytoplasm. In terms of biological role, participates actively in the response to hyperosmotic and heat shock by preventing the aggregation of stress-denatured proteins and by disaggregating proteins, also in an autonomous, DnaK-independent fashion. Unfolded proteins bind initially to DnaJ; upon interaction with the DnaJ-bound protein, DnaK hydrolyzes its bound ATP, resulting in the formation of a stable complex. GrpE releases ADP from DnaK; ATP binding to DnaK triggers the release of the substrate protein, thus completing the reaction cycle. Several rounds of ATP-dependent interactions between DnaJ, DnaK and GrpE are required for fully efficient folding. Also involved, together with DnaK and GrpE, in the DNA replication of plasmids through activation of initiation proteins. The sequence is that of Chaperone protein DnaJ from Shigella dysenteriae serotype 1 (strain Sd197).